A 46-amino-acid polypeptide reads, in one-letter code: Endochitinase 4 (46 aa).

Belongs to the glycosyl hydrolase 19 family. Chitinase class I subfamily.

The catalysed reaction is Random endo-hydrolysis of N-acetyl-beta-D-glucosaminide (1-&gt;4)-beta-linkages in chitin and chitodextrins.. Defense against chitin-containing fungal and bacterial pathogens. This chain is Endochitinase 4, found in Arachis hypogaea (Peanut).